The following is a 581-amino-acid chain: Chaperonin GroEL 1 (581 aa).

Residues 29-32, 86-90, glycine 413, and aspartate 492 each bind ATP; these read TIGP and DGTTT. Residues 522-541 are disordered; that stretch reads PEPEAAGPGGPGADPMGGMG. Gly residues predominate over residues 528-541; that stretch reads GPGGPGADPMGGMG.

Belongs to the chaperonin (HSP60) family. Forms a cylinder of 14 subunits composed of two heptameric rings stacked back-to-back. Interacts with the co-chaperonin GroES.

It localises to the cytoplasm. It carries out the reaction ATP + H2O + a folded polypeptide = ADP + phosphate + an unfolded polypeptide.. Together with its co-chaperonin GroES, plays an essential role in assisting protein folding. The GroEL-GroES system forms a nano-cage that allows encapsulation of the non-native substrate proteins and provides a physical environment optimized to promote and accelerate protein folding. In Prochlorococcus marinus (strain MIT 9301), this protein is Chaperonin GroEL 1.